Consider the following 240-residue polypeptide: Cysteine-rich venom protein triflin (240 aa).

Residues 1–19 (MIAFIVLPILAAVLQQSSG) form the signal peptide. One can recognise an SCP domain in the interval 39-166 (DLHNSLRRSV…KYSYFYVCQY (128 aa)). Intrachain disulfides connect Cys75/Cys153, Cys92/Cys167, Cys148/Cys164, Cys186/Cys193, Cys189/Cys198, Cys202/Cys235, Cys211/Cys229, and Cys220/Cys233. The 34-residue stretch at 202–235 (CTRENEFTNCDSLVQKSSCQDNYMKSKCPASCFC) folds into the ShKT domain.

Belongs to the CRISP family. As to quaternary structure, forms a stable, non-covalent complex with SSP-2. As to expression, expressed by the venom gland.

The protein resides in the secreted. Its function is as follows. Blocks contraction of smooth muscle elicited by high potassium-induced depolarization. May target voltage-gated calcium channels (Cav) on smooth muscle. This chain is Cysteine-rich venom protein triflin, found in Protobothrops flavoviridis (Habu).